The primary structure comprises 188 residues: Elongation factor P (188 aa).

Lys-34 carries the N6-(3,6-diaminohexanoyl)-5-hydroxylysine modification.

Belongs to the elongation factor P family. In terms of processing, may be beta-lysylated on the epsilon-amino group of Lys-34 by the combined action of EpmA and EpmB, and then hydroxylated on the C5 position of the same residue by EpmC (if this protein is present). Lysylation is critical for the stimulatory effect of EF-P on peptide-bond formation. The lysylation moiety may extend toward the peptidyltransferase center and stabilize the terminal 3-CCA end of the tRNA. Hydroxylation of the C5 position on Lys-34 may allow additional potential stabilizing hydrogen-bond interactions with the P-tRNA.

The protein localises to the cytoplasm. The protein operates within protein biosynthesis; polypeptide chain elongation. In terms of biological role, involved in peptide bond synthesis. Alleviates ribosome stalling that occurs when 3 or more consecutive Pro residues or the sequence PPG is present in a protein, possibly by augmenting the peptidyl transferase activity of the ribosome. Modification of Lys-34 is required for alleviation. This Vibrio parahaemolyticus serotype O3:K6 (strain RIMD 2210633) protein is Elongation factor P.